A 499-amino-acid polypeptide reads, in one-letter code: uncharacterized protein (499 aa).

An RING-type; degenerate zinc finger spans residues 10-57 (CGICGQEYSEDEKLLIPRILTECGHTICTGCAGKIKGQSSIIACPFDR). A B box-type; degenerate zinc finger spans residues 101–147 (NKNGVCDENTNHHASNYCETCDADLCEECWTWIHSISTLAHHEKKMI).

This is an uncharacterized protein from Caenorhabditis elegans.